A 637-amino-acid chain; its full sequence is Threonine--tRNA ligase (637 aa).

A TGS domain is found at 1–61; that stretch reads MLNITLPDGS…TEDSSVQIIT (61 aa). The tract at residues 242-533 is catalytic; the sequence is DHRKLGKQLD…LIENHAGSFP (292 aa). Positions 333, 384, and 510 each coordinate Zn(2+).

The protein belongs to the class-II aminoacyl-tRNA synthetase family. In terms of assembly, homodimer. The cofactor is Zn(2+).

The protein resides in the cytoplasm. The catalysed reaction is tRNA(Thr) + L-threonine + ATP = L-threonyl-tRNA(Thr) + AMP + diphosphate + H(+). Catalyzes the attachment of threonine to tRNA(Thr) in a two-step reaction: L-threonine is first activated by ATP to form Thr-AMP and then transferred to the acceptor end of tRNA(Thr). Also edits incorrectly charged L-seryl-tRNA(Thr). The protein is Threonine--tRNA ligase of Neisseria meningitidis serogroup C (strain 053442).